The chain runs to 95 residues: Translation initiation factor 1A (95 aa).

Residues 7-81 (GRKNLRMPED…DKADVTWRYE (75 aa)) enclose the S1-like domain.

It belongs to the eIF-1A family.

In terms of biological role, seems to be required for maximal rate of protein biosynthesis. Enhances ribosome dissociation into subunits and stabilizes the binding of the initiator Met-tRNA(I) to 40 S ribosomal subunits. The sequence is that of Translation initiation factor 1A (eIF1A) from Halobacterium salinarum (strain ATCC 29341 / DSM 671 / R1).